Consider the following 341-residue polypeptide: MATIKDVAKRANVSTTTVSHVINKTRFVAEETRNAVWAAIKELHYSPSAVARSLKVNHTKSIGLLATSSEAAYFAEIIEAVEKNCFQKGYTLILGNAWNNLEKQRAYLSMMAQKRVDGLLVMCSEYPEPLLSMLEEYRHIPMVVMDWGEAKADFTDTVIDNAFEGGYMAGRYLVERGHRDIGVIPGPLERNTGAGRLAGFMKAMEEALIKVPDNWIVQGDFEPESGYHAMQQILSQSHRPTAVFCGGDIMAMGALCAADEMGLRVPQDVSVIGYDNVRNARFFTPALTTIHQPKDSLGETAFNMLLDRIVNKREESQSIEVHPRLVERRSVADGPFRDYRR.

Residues 2 to 56 (ATIKDVAKRANVSTTTVSHVINKTRFVAEETRNAVWAAIKELHYSPSAVARSLKV) enclose the HTH lacI-type domain. A DNA-binding region (H-T-H motif) is located at residues 4 to 23 (IKDVAKRANVSTTTVSHVIN). A DNA-binding region spans residues 48-56 (SAVARSLKV). Positions 73, 190, 192, 221, and 275 each coordinate hypoxanthine.

Homodimer.

It participates in purine metabolism; purine nucleotide biosynthesis [regulation]. In terms of biological role, is the main repressor of the genes involved in the de novo synthesis of purine nucleotides, regulating purB, purC, purEK, purF, purHD, purL, purMN and guaBA expression. PurR is allosterically activated to bind its cognate DNA by binding the purine corepressors, hypoxanthine or guanine, thereby effecting transcription repression. The sequence is that of HTH-type transcriptional repressor PurR from Salmonella arizonae (strain ATCC BAA-731 / CDC346-86 / RSK2980).